A 483-amino-acid chain; its full sequence is SET domain and MYND-type zinc finger protein 6 (483 aa).

The SET domain occupies 4 to 228 (PLIASVILPE…KDEQLFISYI (225 aa)). Zn(2+) contacts are provided by Cys-49, Cys-52, Cys-62, Cys-65, Cys-71, Cys-75, His-83, and Cys-87. The segment at 49–87 (CSTCTEEKVKTQRCAACKIIHYCSKGCQKADWPFHKLEC) adopts an MYND-type zinc-finger fold.

Belongs to the class V-like SAM-binding methyltransferase superfamily.

It localises to the cytoplasm. The protein localises to the nucleus. The sequence is that of SET domain and MYND-type zinc finger protein 6 (set6) from Schizosaccharomyces pombe (strain 972 / ATCC 24843) (Fission yeast).